A 256-amino-acid chain; its full sequence is Thiazole synthase (256 aa).

Lysine 96 functions as the Schiff-base intermediate with DXP in the catalytic mechanism. Residues glycine 157, 184–185 (AG), and 206–207 (NT) each bind 1-deoxy-D-xylulose 5-phosphate.

This sequence belongs to the ThiG family. Homotetramer. Forms heterodimers with either ThiH or ThiS.

The protein localises to the cytoplasm. The catalysed reaction is [ThiS sulfur-carrier protein]-C-terminal-Gly-aminoethanethioate + 2-iminoacetate + 1-deoxy-D-xylulose 5-phosphate = [ThiS sulfur-carrier protein]-C-terminal Gly-Gly + 2-[(2R,5Z)-2-carboxy-4-methylthiazol-5(2H)-ylidene]ethyl phosphate + 2 H2O + H(+). It functions in the pathway cofactor biosynthesis; thiamine diphosphate biosynthesis. Catalyzes the rearrangement of 1-deoxy-D-xylulose 5-phosphate (DXP) to produce the thiazole phosphate moiety of thiamine. Sulfur is provided by the thiocarboxylate moiety of the carrier protein ThiS. In vitro, sulfur can be provided by H(2)S. The protein is Thiazole synthase of Roseobacter denitrificans (strain ATCC 33942 / OCh 114) (Erythrobacter sp. (strain OCh 114)).